Here is a 145-residue protein sequence, read N- to C-terminus: 3-hydroxyacyl-[acyl-carrier-protein] dehydratase FabZ (145 aa).

Residue His-52 is part of the active site.

The protein belongs to the thioester dehydratase family. FabZ subfamily.

It localises to the cytoplasm. It catalyses the reaction a (3R)-hydroxyacyl-[ACP] = a (2E)-enoyl-[ACP] + H2O. Its function is as follows. Involved in unsaturated fatty acids biosynthesis. Catalyzes the dehydration of short chain beta-hydroxyacyl-ACPs and long chain saturated and unsaturated beta-hydroxyacyl-ACPs. This is 3-hydroxyacyl-[acyl-carrier-protein] dehydratase FabZ from Deinococcus radiodurans (strain ATCC 13939 / DSM 20539 / JCM 16871 / CCUG 27074 / LMG 4051 / NBRC 15346 / NCIMB 9279 / VKM B-1422 / R1).